The chain runs to 128 residues: Class I hydrophobin 19 (128 aa).

4 cysteine pairs are disulfide-bonded: C48–C107, C55–C101, C56–C88, and C108–C121. The N-linked (GlcNAc...) asparagine glycan is linked to N110.

It belongs to the fungal hydrophobin family. Self-assembles to form functional amyloid fibrils called rodlets. Self-assembly into fibrillar rodlets occurs spontaneously at hydrophobic:hydrophilic interfaces and the rodlets further associate laterally to form amphipathic monolayers.

It is found in the secreted. The protein resides in the cell wall. Aerial growth, conidiation, and dispersal of filamentous fungi in the environment rely upon a capability of their secreting small amphipathic proteins called hydrophobins (HPBs) with low sequence identity. Class I can self-assemble into an outermost layer of rodlet bundles on aerial cell surfaces, conferring cellular hydrophobicity that supports fungal growth, development and dispersal; whereas Class II form highly ordered films at water-air interfaces through intermolecular interactions but contribute nothing to the rodlet structure. The polypeptide is Class I hydrophobin 19 (Pleurotus ostreatus (strain PC15) (Oyster mushroom)).